A 59-amino-acid chain; its full sequence is Large ribosomal subunit protein uL30 (59 aa).

The protein belongs to the universal ribosomal protein uL30 family. As to quaternary structure, part of the 50S ribosomal subunit.

The sequence is that of Large ribosomal subunit protein uL30 from Psychrobacter cryohalolentis (strain ATCC BAA-1226 / DSM 17306 / VKM B-2378 / K5).